A 551-amino-acid polypeptide reads, in one-letter code: Putative ABC transporter ATP-binding protein BA_3364/GBAA_3364/BAS3118 (551 aa).

2 consecutive ABC transporter domains span residues 5 to 243 (AEIK…FRPF) and 293 to 525 (LSAE…SINR). Residues 39-46 (GGSGSGKT) and 327-334 (GKNGTGKS) each bind ATP.

It belongs to the ABC transporter superfamily.

It localises to the cell membrane. Probably part of an ABC transporter complex. Responsible for energy coupling to the transport system. In Bacillus anthracis, this protein is Putative ABC transporter ATP-binding protein BA_3364/GBAA_3364/BAS3118.